Consider the following 244-residue polypeptide: Glucosamine-6-phosphate deaminase (244 aa).

D67 functions as the Proton acceptor; for enolization step in the catalytic mechanism. The active-site For ring-opening step is the N136. H138 functions as the Proton acceptor; for ring-opening step in the catalytic mechanism. Residue E143 is the For ring-opening step of the active site.

Belongs to the glucosamine/galactosamine-6-phosphate isomerase family. NagB subfamily.

The catalysed reaction is alpha-D-glucosamine 6-phosphate + H2O = beta-D-fructose 6-phosphate + NH4(+). Its pathway is amino-sugar metabolism; N-acetylneuraminate degradation; D-fructose 6-phosphate from N-acetylneuraminate: step 5/5. Its function is as follows. Catalyzes the reversible isomerization-deamination of glucosamine 6-phosphate (GlcN6P) to form fructose 6-phosphate (Fru6P) and ammonium ion. This chain is Glucosamine-6-phosphate deaminase, found in Clostridium botulinum (strain ATCC 19397 / Type A).